We begin with the raw amino-acid sequence, 429 residues long: 3-phosphoshikimate 1-carboxyvinyltransferase (429 aa).

3-phosphoshikimate-binding residues include Lys23, Ser24, and Arg28. Lys23 lines the phosphoenolpyruvate pocket. Phosphoenolpyruvate is bound by residues Gly95 and Arg123. 4 residues coordinate 3-phosphoshikimate: Ser168, Gln170, Asp316, and Lys343. Gln170 contacts phosphoenolpyruvate. The Proton acceptor role is filled by Asp316. Arg347 and Arg389 together coordinate phosphoenolpyruvate.

The protein belongs to the EPSP synthase family. Monomer.

Its subcellular location is the cytoplasm. The catalysed reaction is 3-phosphoshikimate + phosphoenolpyruvate = 5-O-(1-carboxyvinyl)-3-phosphoshikimate + phosphate. It functions in the pathway metabolic intermediate biosynthesis; chorismate biosynthesis; chorismate from D-erythrose 4-phosphate and phosphoenolpyruvate: step 6/7. Catalyzes the transfer of the enolpyruvyl moiety of phosphoenolpyruvate (PEP) to the 5-hydroxyl of shikimate-3-phosphate (S3P) to produce enolpyruvyl shikimate-3-phosphate and inorganic phosphate. In Bacillus anthracis (strain A0248), this protein is 3-phosphoshikimate 1-carboxyvinyltransferase.